Here is a 206-residue protein sequence, read N- to C-terminus: Large ribosomal subunit protein uL4 (206 aa).

Residues 47-71 (TRAQKGRSEVAGSTRKQWRQKGTGR) are disordered.

The protein belongs to the universal ribosomal protein uL4 family. As to quaternary structure, part of the 50S ribosomal subunit.

Functionally, one of the primary rRNA binding proteins, this protein initially binds near the 5'-end of the 23S rRNA. It is important during the early stages of 50S assembly. It makes multiple contacts with different domains of the 23S rRNA in the assembled 50S subunit and ribosome. Its function is as follows. Forms part of the polypeptide exit tunnel. This is Large ribosomal subunit protein uL4 from Nitrosomonas eutropha (strain DSM 101675 / C91 / Nm57).